Here is a 161-residue protein sequence, read N- to C-terminus: Cytochrome c-type biogenesis protein CcmE (161 aa).

The Cytoplasmic segment spans residues 1–8 (MNPRRKKR). A helical; Signal-anchor for type II membrane protein membrane pass occupies residues 9 to 29 (LTLAVALIAGVAAVASLLLYA). Topologically, residues 30-161 (LNSNLNLFYT…TYNQKALEDK (132 aa)) are periplasmic. Heme-binding residues include His-131 and Tyr-135. A disordered region spans residues 142-161 (EAMGQTHEKPTYNQKALEDK). Basic and acidic residues predominate over residues 147–161 (THEKPTYNQKALEDK).

Belongs to the CcmE/CycJ family.

The protein localises to the cell inner membrane. In terms of biological role, heme chaperone required for the biogenesis of c-type cytochromes. Transiently binds heme delivered by CcmC and transfers the heme to apo-cytochromes in a process facilitated by CcmF and CcmH. In Shewanella frigidimarina (strain NCIMB 400), this protein is Cytochrome c-type biogenesis protein CcmE.